Consider the following 234-residue polypeptide: MQTYSTPLTLIIVTSLFLFTTQGSSSNAVEPTKKPLKLANYRATCEDRTRTLVTRLNTSHHSVVWQRYDIYSRYMRRMPPLCIITDAYKETTHQGGATFTCTRQNLTLYNLTVKDTGVYLLQDQYTGDVEAFYLIIHPRSFCRALETRRCFYPGPGRVVVTDSQEADRAIISDLKRQWSGLSLHCAWVSGLMIFVGALVICFLRSQRIGEQDAEQLRTDLDTEPLLLTVDGDLE.

Residues 1–23 form the signal peptide; sequence MQTYSTPLTLIIVTSLFLFTTQG. A helical membrane pass occupies residues 183 to 203; that stretch reads LHCAWVSGLMIFVGALVICFL.

It is found in the host membrane. This Human cytomegalovirus (strain Merlin) (HHV-5) protein is Membrane glycoprotein RL11 (RL11).